The primary structure comprises 757 residues: Protein transport protein SEC23-2 (757 aa).

Cys-56, Cys-61, Cys-80, and Cys-83 together coordinate Zn(2+).

It belongs to the SEC23/SEC24 family. SEC23 subfamily. As to quaternary structure, the COPII coat is composed of at least 5 proteins: the SEC23/24 complex, the SEC13/31 complex, and the protein SAR1.

The protein localises to the cytoplasm. It is found in the cytoplasmic vesicle. Its subcellular location is the COPII-coated vesicle membrane. The protein resides in the endoplasmic reticulum membrane. It localises to the golgi apparatus membrane. Its function is as follows. Component of the coat protein complex II (COPII) which promotes the formation of transport vesicles from the endoplasmic reticulum (ER). The coat has two main functions, the physical deformation of the endoplasmic reticulum membrane into vesicles and the selection of cargo molecules. The polypeptide is Protein transport protein SEC23-2 (SEC232) (Candida glabrata (strain ATCC 2001 / BCRC 20586 / JCM 3761 / NBRC 0622 / NRRL Y-65 / CBS 138) (Yeast)).